Consider the following 338-residue polypeptide: 4-hydroxy-3-methylbut-2-enyl diphosphate reductase (338 aa).

Cysteine 21 provides a ligand contact to [4Fe-4S] cluster. (2E)-4-hydroxy-3-methylbut-2-enyl diphosphate contacts are provided by histidine 50 and histidine 83. Dimethylallyl diphosphate-binding residues include histidine 50 and histidine 83. Isopentenyl diphosphate-binding residues include histidine 50 and histidine 83. Cysteine 105 serves as a coordination point for [4Fe-4S] cluster. Histidine 133 is a binding site for (2E)-4-hydroxy-3-methylbut-2-enyl diphosphate. Histidine 133 provides a ligand contact to dimethylallyl diphosphate. Histidine 133 lines the isopentenyl diphosphate pocket. The Proton donor role is filled by glutamate 135. Threonine 173 serves as a coordination point for (2E)-4-hydroxy-3-methylbut-2-enyl diphosphate. Cysteine 203 provides a ligand contact to [4Fe-4S] cluster. Residues serine 231, serine 232, asparagine 233, and serine 276 each coordinate (2E)-4-hydroxy-3-methylbut-2-enyl diphosphate. The dimethylallyl diphosphate site is built by serine 231, serine 232, asparagine 233, and serine 276. Serine 231, serine 232, asparagine 233, and serine 276 together coordinate isopentenyl diphosphate.

Belongs to the IspH family. [4Fe-4S] cluster serves as cofactor.

The enzyme catalyses isopentenyl diphosphate + 2 oxidized [2Fe-2S]-[ferredoxin] + H2O = (2E)-4-hydroxy-3-methylbut-2-enyl diphosphate + 2 reduced [2Fe-2S]-[ferredoxin] + 2 H(+). It catalyses the reaction dimethylallyl diphosphate + 2 oxidized [2Fe-2S]-[ferredoxin] + H2O = (2E)-4-hydroxy-3-methylbut-2-enyl diphosphate + 2 reduced [2Fe-2S]-[ferredoxin] + 2 H(+). It participates in isoprenoid biosynthesis; dimethylallyl diphosphate biosynthesis; dimethylallyl diphosphate from (2E)-4-hydroxy-3-methylbutenyl diphosphate: step 1/1. Its pathway is isoprenoid biosynthesis; isopentenyl diphosphate biosynthesis via DXP pathway; isopentenyl diphosphate from 1-deoxy-D-xylulose 5-phosphate: step 6/6. Its function is as follows. Catalyzes the conversion of 1-hydroxy-2-methyl-2-(E)-butenyl 4-diphosphate (HMBPP) into a mixture of isopentenyl diphosphate (IPP) and dimethylallyl diphosphate (DMAPP). Acts in the terminal step of the DOXP/MEP pathway for isoprenoid precursor biosynthesis. This chain is 4-hydroxy-3-methylbut-2-enyl diphosphate reductase, found in Streptomyces coelicolor (strain ATCC BAA-471 / A3(2) / M145).